A 70-amino-acid chain; its full sequence is Large ribosomal subunit protein bL31 (70 aa).

4 residues coordinate Zn(2+): Cys-16, Cys-18, Cys-37, and Cys-40.

Belongs to the bacterial ribosomal protein bL31 family. Type A subfamily. Part of the 50S ribosomal subunit. Requires Zn(2+) as cofactor.

Binds the 23S rRNA. This chain is Large ribosomal subunit protein bL31, found in Haemophilus influenzae (strain 86-028NP).